Reading from the N-terminus, the 157-residue chain is uncharacterized protein (157 aa).

This is an uncharacterized protein from Pseudoalteromonas espejiana (Bacteriophage PM2).